Consider the following 333-residue polypeptide: Anthranilate phosphoribosyltransferase (333 aa).

Residues glycine 80, 83–84 (GD), serine 88, 90–93 (NIST), 108–116 (KHGNRSVSS), and serine 120 contribute to the 5-phospho-alpha-D-ribose 1-diphosphate site. Residue glycine 80 participates in anthranilate binding. Residue serine 92 participates in Mg(2+) binding. Residue asparagine 111 coordinates anthranilate. Arginine 166 lines the anthranilate pocket. 2 residues coordinate Mg(2+): aspartate 224 and glutamate 225.

Belongs to the anthranilate phosphoribosyltransferase family. As to quaternary structure, homodimer. Requires Mg(2+) as cofactor.

The enzyme catalyses N-(5-phospho-beta-D-ribosyl)anthranilate + diphosphate = 5-phospho-alpha-D-ribose 1-diphosphate + anthranilate. The protein operates within amino-acid biosynthesis; L-tryptophan biosynthesis; L-tryptophan from chorismate: step 2/5. In terms of biological role, catalyzes the transfer of the phosphoribosyl group of 5-phosphorylribose-1-pyrophosphate (PRPP) to anthranilate to yield N-(5'-phosphoribosyl)-anthranilate (PRA). The chain is Anthranilate phosphoribosyltransferase from Yersinia pseudotuberculosis serotype O:1b (strain IP 31758).